Here is a 360-residue protein sequence, read N- to C-terminus: Peptide chain release factor 1 (360 aa).

N5-methylglutamine is present on Q235. The segment at 285 to 313 is disordered; the sequence is KRQQAEASTRRNLLGSGDRSDRNRTYNFP.

It belongs to the prokaryotic/mitochondrial release factor family. Post-translationally, methylated by PrmC. Methylation increases the termination efficiency of RF1.

It is found in the cytoplasm. Functionally, peptide chain release factor 1 directs the termination of translation in response to the peptide chain termination codons UAG and UAA. This is Peptide chain release factor 1 from Salmonella paratyphi A (strain ATCC 9150 / SARB42).